Here is a 268-residue protein sequence, read N- to C-terminus: Testis-specific serine/threonine-protein kinase 3 (268 aa).

Residues 10-265 form the Protein kinase domain; the sequence is YQLGKTIGEG…IEEVSWHPWL (256 aa). Residues 16-24 and Lys-39 each bind ATP; that span reads IGEGTYSKV. Asp-134 serves as the catalytic Proton acceptor. Ser-166 carries the post-translational modification Phosphoserine. Thr-168 bears the Phosphothreonine mark.

The protein belongs to the protein kinase superfamily. CAMK Ser/Thr protein kinase family. It depends on Mg(2+) as a cofactor. Mn(2+) is required as a cofactor. Post-translationally, autophosphorylated at Ser-166. Phosphorylation at Thr-168 by PDPK1 activates the serine/threonine protein kinase activity.

It is found in the cell projection. The protein resides in the cilium. Its subcellular location is the flagellum. It catalyses the reaction L-seryl-[protein] + ATP = O-phospho-L-seryl-[protein] + ADP + H(+). It carries out the reaction L-threonyl-[protein] + ATP = O-phospho-L-threonyl-[protein] + ADP + H(+). With respect to regulation, activated by phosphorylation on Thr-168 by PDPK1. Functionally, serine/threonine protein kinase required for spermatid development and male fertility. The chain is Testis-specific serine/threonine-protein kinase 3 from Homo sapiens (Human).